Consider the following 425-residue polypeptide: tRNA(Ile)-lysidine synthase (425 aa).

27–32 contributes to the ATP binding site; that stretch reads SGGLDS.

Belongs to the tRNA(Ile)-lysidine synthase family.

It localises to the cytoplasm. It catalyses the reaction cytidine(34) in tRNA(Ile2) + L-lysine + ATP = lysidine(34) in tRNA(Ile2) + AMP + diphosphate + H(+). In terms of biological role, ligates lysine onto the cytidine present at position 34 of the AUA codon-specific tRNA(Ile) that contains the anticodon CAU, in an ATP-dependent manner. Cytidine is converted to lysidine, thus changing the amino acid specificity of the tRNA from methionine to isoleucine. The chain is tRNA(Ile)-lysidine synthase from Streptococcus pneumoniae (strain 70585).